A 377-amino-acid chain; its full sequence is DnaJ-related protein SCJ1 (377 aa).

The signal sequence occupies residues 1-21 (MIPKLYIHLILSLLLLPLILA). Residues 23 to 88 (DYYAILEIDK…EKKKIYDQFG (66 aa)) form the J domain. The CR-type zinc-finger motif lies at 156 to 237 (GSSIEFTLNL…CHGKKVTKKN (82 aa)). CXXCXGXG motif repeat units lie at residues 169-176 (CDACHGSG), 185-192 (CPDCQGRG), 211-218 (CGRCGGTG), and 225-232 (CKTCHGKK). The short motif at 288-290 (RGD) is the Cell attachment site element. The short motif at 374–377 (KDEL) is the Prevents secretion from ER element.

It localises to the endoplasmic reticulum lumen. Its function is as follows. Regulates protein folding in the endoplasmic reticulum lumen. Probably acts as a J-protein for the Hsp70-type chaperone KAR2 by stimulating its ATP-dependent reaction cycle and initiating folding reactions. Also involved in the endoplasmic reticulum-associated degradation (ERAD) process. Cooperates with KAR2 and another J-protein JEM1 to facilitate the export of ERAD substrates to the cytoplasm by maintaining them in a translocation-competent state and preventing their aggregation in the endoplasmic reticulum lumen. In Saccharomyces cerevisiae (strain ATCC 204508 / S288c) (Baker's yeast), this protein is DnaJ-related protein SCJ1 (SCJ1).